The sequence spans 941 residues: Cell wall protein IFF3 (941 aa).

Residues 1–20 form the signal peptide; sequence MQLFQNILVSIALLTQVVFA. N-linked (GlcNAc...) asparagine glycosylation is found at Asn-36, Asn-367, Asn-686, Asn-732, Asn-790, Asn-818, Asn-825, Asn-884, and Asn-917. Asn-917 is lipidated: GPI-anchor amidated asparagine. Positions 918-941 are cleaved as a propeptide — removed in mature form; that stretch reads GSNKESIENIKYLTLVVFGLMMFM.

This sequence belongs to the HYR1/IFF family. The GPI-anchor is attached to the protein in the endoplasmic reticulum and serves to target the protein to the cell surface. There, the glucosamine-inositol phospholipid moiety is cleaved off and the GPI-modified mannoprotein is covalently attached via its lipidless GPI glycan remnant to the 1,6-beta-glucan of the outer cell wall layer.

The protein localises to the secreted. It is found in the cell wall. Its subcellular location is the membrane. GPI-anchored cell wall protein involved in cell wall organization, hyphal growth, as well as in host-fungal interaction and virulence. This chain is Cell wall protein IFF3 (IFF3), found in Candida albicans (strain SC5314 / ATCC MYA-2876) (Yeast).